Reading from the N-terminus, the 1895-residue chain is Probable WRKY transcription factor 19 (1895 aa).

Positions 1 to 85 are disordered; that stretch reads MSEKEELPLT…SGSGLSQQLN (85 aa). Residues 10–22 show a composition bias toward polar residues; it reads TLTSIGAATATSD. Low complexity predominate over residues 28-39; it reads GSSGEGISSSSS. The segment covering 46-62 has biased composition (polar residues); it reads MQNSPTGLMISQSSSMC. The span at 75–85 shows a compositional bias: low complexity; sequence SSGSGLSQQLN. Residues 291 to 371 form the PAH domain; that stretch reads RPLTIDGGGN…LGFNTYLSKE (81 aa). Positions 408–417 are enriched in polar residues; that stretch reads ANMQPQTEYP. Disordered regions lie at residues 408–442, 517–538, and 580–620; these read ANMQ…SSLL, YKDR…TYLS, and EASD…ADAS. The span at 418 to 427 shows a compositional bias: low complexity; that stretch reads SSSAVQSFSS. Positions 428-442 are enriched in polar residues; the sequence is GQPQIPTSAPDSSLL. The segment at residues 462-526 is a DNA-binding region (WRKY 1); it reads NVDKQVNDGY…YKDRHNHEPP (65 aa). Residues 635–700 constitute a DNA-binding region (WRKY 2); sequence SEVDNLDDGY…SLCRRGISVY (66 aa). One can recognise a TIR domain in the interval 666–808; sequence KDYDVVIRYG…EIVRDALKVL (143 aa). The NB-ARC domain maps to 800–1087; the sequence is IVRDALKVLC…LDGCGFSAHV (288 aa). Residue 844 to 851 participates in ATP binding; that stretch reads GTVGIGKT. LRR repeat units lie at residues 1206 to 1227, 1228 to 1249, 1259 to 1281, 1282 to 1304, 1306 to 1328, 1329 to 1351, 1352 to 1371, 1373 to 1395, 1397 to 1419, and 1421 to 1442; these read KLRL…FNPE, NLVE…KKAR, KLKK…SSAT, NLEH…ISYL, KLVF…VDLE, SLEV…SPNV, KELY…IKNL, LLEK…IYKL, HLET…SRRM, and CLRF…ISYL. The interval 1562 to 1583 is disordered; the sequence is ETVAPPSSSSEAREEEVETEET. One can recognise a Protein kinase domain in the interval 1626-1877; it reads WQKGQLLGRG…AAELLNHPFV (252 aa). ATP contacts are provided by residues 1632–1640 and Lys-1654; that span reads LGRGSLGSV. Asp-1758 is a catalytic residue.

The protein belongs to the disease resistance X-TIR-NB-LRR-X family.

The protein localises to the nucleus. Functionally, transcription factor. Interacts specifically with the W box (5'-(T)TGAC[CT]-3'), a frequently occurring elicitor-responsive cis-acting element. May act also as a disease resistance protein with a serine/threonine-protein kinase activity. The sequence is that of Probable WRKY transcription factor 19 (WRKY19) from Arabidopsis thaliana (Mouse-ear cress).